Consider the following 211-residue polypeptide: Protein FAM167A (211 aa).

2 disordered regions span residues 1–30 and 56–108; these read MSVPQIQVEEVAGGEEGPAGTTPPPDDHLR and EEQT…GKLE. A coiled-coil region spans residues 120 to 153; that stretch reads LRKELMEMRLQDQQLARQLMRLRSDIHKLKIEQT.

Belongs to the FAM167 (SEC) family.

The protein is Protein FAM167A (FAM167A) of Bos taurus (Bovine).